A 140-amino-acid polypeptide reads, in one-letter code: MRSKPRIALIAHDRKKDDIVAFAGRHRDFLAQCDLLATGTTGGRIAAETGLPVARMLSGPWGGDLQIGAQLAEGRVTAVVFLRDPMTPQPHEPDINALVRACDVHNVPCATNLATAELVVVELARICFEEDQAAADDAAP.

In terms of domain architecture, MGS-like spans 1–140 (MRSKPRIALI…DQAAADDAAP (140 aa)). Substrate is bound by residues His-12, Lys-16, 38 to 41 (TGTT), and 58 to 59 (SG). Asp-64 (proton donor/acceptor) is an active-site residue. His-91 is a binding site for substrate.

The protein belongs to the methylglyoxal synthase family.

It catalyses the reaction dihydroxyacetone phosphate = methylglyoxal + phosphate. Functionally, catalyzes the formation of methylglyoxal from dihydroxyacetone phosphate. The polypeptide is Methylglyoxal synthase (Cupriavidus metallidurans (strain ATCC 43123 / DSM 2839 / NBRC 102507 / CH34) (Ralstonia metallidurans)).